A 147-amino-acid chain; its full sequence is Protein MC014 (147 aa).

Its subcellular location is the host nucleus. The protein is Protein MC014 (MC014) of Homo sapiens (Human).